A 391-amino-acid polypeptide reads, in one-letter code: Acetylgalactosaminyl-O-glycosyl-glycoprotein beta-1,3-N-acetylglucosaminyltransferase (391 aa).

The Cytoplasmic segment spans residues 1-11 (MALPSSRRFKS). A helical; Signal-anchor for type II membrane protein transmembrane segment spans residues 12–32 (PTTLAFFLVGVTLVVLNQWFL). Residues 33–391 (QEHRQEKAKG…TAGEQNPDAH (359 aa)) lie on the Lumenal side of the membrane. Residues Asn68 and Asn191 are each glycosylated (N-linked (GlcNAc...) asparagine).

Belongs to the glycosyltransferase 31 family.

The protein localises to the golgi apparatus membrane. The enzyme catalyses a 3-O-[N-acetyl-alpha-D-galactosaminyl]-L-threonyl-[protein] + UDP-N-acetyl-alpha-D-glucosamine = a 3-O-[N-acetyl-beta-D-glucosaminyl-(1-&gt;3)-N-acetyl-alpha-D-galactosaminyl]-L-threonyl-[protein] + UDP + H(+). The catalysed reaction is a 3-O-[N-acetyl-alpha-D-galactosaminyl]-L-seryl-[protein] + UDP-N-acetyl-alpha-D-glucosamine = 3-O-[N-acetyl-beta-D-glucosaminyl-(1-&gt;3)-N-acetyl-alpha-D-galactosaminyl]-L-seryl-[protein] + UDP + H(+). Its pathway is protein modification; protein glycosylation. Its function is as follows. Beta-1,3-N-acetylglucosaminyltransferase that synthesizes the core 3 structure of the O-glycan, an important precursor in the biosynthesis of mucin-type glycoproteins. Plays an important role in the synthesis of mucin-type O-glycans in digestive organs. The sequence is that of Acetylgalactosaminyl-O-glycosyl-glycoprotein beta-1,3-N-acetylglucosaminyltransferase (B3gnt6) from Mus musculus (Mouse).